Here is a 224-residue protein sequence, read N- to C-terminus: 25 kDa integral membrane protein (224 aa).

Residues 1-12 are Cytoplasmic-facing; it reads MKLSFTKVSLTN. A helical transmembrane segment spans residues 13–33; the sequence is ILILFNCLFIIFSMIVLTFGV. Residues 34-52 lie on the Extracellular side of the membrane; sequence IPQIYLLKFANILHGVRPS. The chain crosses the membrane as a helical span at residues 53–73; it reads IFPIVCFTGSFVIIVACVGII. At 74-80 the chain is on the cytoplasmic side; that stretch reads GLMKGGK. A helical membrane pass occupies residues 81–101; it reads CLLTMHIIALIIATIIDISTA. Over 102–189 the chain is Extracellular; sequence TLSAIKQNEF…LNKYVRYYID (88 aa). A glycan (N-linked (GlcNAc...) asparagine) is linked at N120. Residues 190 to 210 form a helical membrane-spanning segment; it reads ILIYLCFIFGFIKLIYSLFTF. Residues 211 to 224 are Cytoplasmic-facing; that stretch reads TQRQRIFSEKTPVA.

Belongs to the tetraspanin (TM4SF) family.

Its subcellular location is the membrane. This Schistosoma japonicum (Blood fluke) protein is 25 kDa integral membrane protein.